The following is a 445-amino-acid chain: Glutamate-1-semialdehyde 2,1-aminomutase (445 aa).

Lys263 is modified (N6-(pyridoxal phosphate)lysine).

This sequence belongs to the class-III pyridoxal-phosphate-dependent aminotransferase family. HemL subfamily. It depends on pyridoxal 5'-phosphate as a cofactor.

Its subcellular location is the cytoplasm. It catalyses the reaction (S)-4-amino-5-oxopentanoate = 5-aminolevulinate. The protein operates within porphyrin-containing compound metabolism; protoporphyrin-IX biosynthesis; 5-aminolevulinate from L-glutamyl-tRNA(Glu): step 2/2. The sequence is that of Glutamate-1-semialdehyde 2,1-aminomutase from Haloarcula marismortui (strain ATCC 43049 / DSM 3752 / JCM 8966 / VKM B-1809) (Halobacterium marismortui).